We begin with the raw amino-acid sequence, 121 residues long: Large ribosomal subunit protein uL22 (121 aa).

Belongs to the universal ribosomal protein uL22 family. As to quaternary structure, part of the 50S ribosomal subunit.

This protein binds specifically to 23S rRNA; its binding is stimulated by other ribosomal proteins, e.g. L4, L17, and L20. It is important during the early stages of 50S assembly. It makes multiple contacts with different domains of the 23S rRNA in the assembled 50S subunit and ribosome. In terms of biological role, the globular domain of the protein is located near the polypeptide exit tunnel on the outside of the subunit, while an extended beta-hairpin is found that lines the wall of the exit tunnel in the center of the 70S ribosome. The polypeptide is Large ribosomal subunit protein uL22 (Rickettsia massiliae (strain Mtu5)).